The primary structure comprises 306 residues: Glutathione transport system permease protein GsiC (306 aa).

Residues 1–8 lie on the Cytoplasmic side of the membrane; that stretch reads MLNYVLKR. A helical transmembrane segment spans residues 9–29; the sequence is LLGLIPTLLIVAVLVFLFVHL. Residues 30-102 are Periplasmic-facing; sequence LPGDPARLIA…SRFLPTLWLT (73 aa). The region spanning 95-292 is the ABC transmembrane type-1 domain; the sequence is FLPTLWLTIT…LEFILINLVV (198 aa). The helical transmembrane segment at 103–123 threads the bilayer; it reads ITSMIWAVLFGMAIGIAAAVW. Residues 124–134 lie on the Cytoplasmic side of the membrane; the sequence is RNRWPDRLGMT. A helical transmembrane segment spans residues 135–155; that stretch reads LAVTGISFPAFALGMLLMQIF. The Periplasmic segment spans residues 156-168; that stretch reads SVDLGWLPTVGAD. A helical transmembrane segment spans residues 169 to 189; that stretch reads SWQHYILPSLTLGAAVASVMA. At 190-228 the chain is on the cytoplasmic side; sequence RFTRSSFVDVLSEDYMRTARAKGVSETWVVLKHGLRNAM. A helical membrane pass occupies residues 229 to 249; the sequence is IPVVTMMGLQFGFLLGGSIVV. The Periplasmic portion of the chain corresponds to 250–278; sequence EKVFNWPGLGRLLVDSVDMRDYPVIQAEV. Residues 279-299 form a helical membrane-spanning segment; it reads LLFSLEFILINLVVDVLYAAI. Topologically, residues 300 to 306 are cytoplasmic; that stretch reads NPAIRYK.

The protein belongs to the binding-protein-dependent transport system permease family. In terms of assembly, the complex is composed of two ATP-binding proteins (GsiA), two transmembrane proteins (GsiC and GsiD) and a solute-binding protein (GsiB).

The protein localises to the cell inner membrane. In terms of biological role, part of the ABC transporter complex GsiABCD involved in glutathione import. Probably responsible for the translocation of the substrate across the membrane. The polypeptide is Glutathione transport system permease protein GsiC (Salmonella typhimurium (strain LT2 / SGSC1412 / ATCC 700720)).